The chain runs to 316 residues: Apolipoprotein E (316 aa).

The N-terminal stretch at 1-18 (MKVLWVALVVALLAGCQA) is a signal peptide. 8 consecutive repeat copies span residues 79-100 (VLME…GQLA), 101-122 (PMAQ…ARLG), 123-144 (SDME…AMLG), 145-166 (QSTE…KRLL), 167-188 (RDAD…EGAE), 189-210 (RSVS…SRAA), 211-232 (TLST…QKLH), and 233-254 (GRLE…QQLE). Residues 79–254 (VLMEETMKEV…RLDKMRQQLE (176 aa)) form an 8 X 22 AA approximate tandem repeats region. M142 carries the post-translational modification Methionine sulfoxide. A Phosphoserine modification is found at S146. An LDL and other lipoprotein receptors binding region spans residues 157-167 (HLRKLRKRLLR). 161–164 (LRKR) serves as a coordination point for heparin. The tract at residues 209–289 (AATLSTQVGQ…SWFEPLVEDM (81 aa)) is lipid-binding and lipoprotein association. An O-linked (GalNAc...) threonine glycan is attached at T211. 228 to 235 (RQKLHGRL) is a binding site for heparin. The interval 265-316 (SQIRLQAEAFQARLRSWFEPLVEDMQRQWAGLVEKVQLALHLSPTSPPSENH) is homooligomerization. The segment at 277–289 (RLRSWFEPLVEDM) is specificity for association with VLDL.

This sequence belongs to the apolipoprotein A1/A4/E family. In terms of assembly, homotetramer. May interact with ABCA1; functionally associated with ABCA1 in the biogenesis of HDLs. May interact with APP/A4 amyloid-beta peptide; the interaction is extremely stable in vitro but its physiological significance is unclear. May interact with MAPT. May interact with MAP2. In the cerebrospinal fluid, interacts with secreted SORL1. Interacts with PMEL; this allows the loading of PMEL luminal fragment on ILVs to induce fibril nucleation. Post-translationally, APOE exists as multiple glycosylated and sialylated glycoforms within cells and in plasma. The extent of glycosylation and sialylation are tissue and context specific. In terms of processing, glycated in plasma VLDL. Phosphorylated by FAM20C in the extracellular medium.

The protein resides in the secreted. It is found in the extracellular space. It localises to the extracellular matrix. Its subcellular location is the extracellular vesicle. The protein localises to the endosome. The protein resides in the multivesicular body. APOE is an apolipoprotein, a protein associating with lipid particles, that mainly functions in lipoprotein-mediated lipid transport between organs via the plasma and interstitial fluids. APOE is a core component of plasma lipoproteins and is involved in their production, conversion and clearance. Apolipoproteins are amphipathic molecules that interact both with lipids of the lipoprotein particle core and the aqueous environment of the plasma. As such, APOE associates with chylomicrons, chylomicron remnants, very low density lipoproteins (VLDL) and intermediate density lipoproteins (IDL) but shows a preferential binding to high-density lipoproteins (HDL). It also binds a wide range of cellular receptors including the LDL receptor/LDLR and the very low-density lipoprotein receptor/VLDLR that mediate the cellular uptake of the APOE-containing lipoprotein particles. Finally, APOE also has a heparin-binding activity and binds heparan-sulfate proteoglycans on the surface of cells, a property that supports the capture and the receptor-mediated uptake of APOE-containing lipoproteins by cells. This chain is Apolipoprotein E (APOE), found in Ovis aries musimon (Mouflon).